The chain runs to 878 residues: Probable di- and tripeptidase DUG2 (878 aa).

5 WD repeats span residues N18 to T57, H68 to D107, R235 to T274, D282 to T322, and P362 to P405. A Zn(2+)-binding site is contributed by H520. D522 is an active-site residue. Zn(2+) is bound at residue D553. E586 functions as the Proton acceptor in the catalytic mechanism. E587 is a Zn(2+) binding site. The WD 6 repeat unit spans residues I608 to L651. Residue H853 participates in Zn(2+) binding.

It belongs to the peptidase M20A family. As to quaternary structure, component of the GSH degradosomal complex composed of at least DUG1, DUG2 and DUG3. The cofactor is Zn(2+).

Its subcellular location is the cytoplasm. The protein localises to the nucleus. Functionally, component of the GSH degradosomal complex involved in the degradation of glutathione (GSH) and other peptides containing a gamma-glu-X bond. This chain is Probable di- and tripeptidase DUG2 (DUG2), found in Saccharomyces cerevisiae (strain ATCC 204508 / S288c) (Baker's yeast).